Here is a 77-residue protein sequence, read N- to C-terminus: ATP synthase subunit c (77 aa).

2 helical membrane passes run 7-27 (AFKY…AALG) and 57-77 (VGLI…ILFL).

This sequence belongs to the ATPase C chain family. F-type ATPases have 2 components, F(1) - the catalytic core - and F(0) - the membrane proton channel. F(1) has five subunits: alpha(3), beta(3), gamma(1), delta(1), epsilon(1). F(0) has three main subunits: a(1), b(2) and c(10-14). The alpha and beta chains form an alternating ring which encloses part of the gamma chain. F(1) is attached to F(0) by a central stalk formed by the gamma and epsilon chains, while a peripheral stalk is formed by the delta and b chains.

It localises to the cell membrane. F(1)F(0) ATP synthase produces ATP from ADP in the presence of a proton or sodium gradient. F-type ATPases consist of two structural domains, F(1) containing the extramembraneous catalytic core and F(0) containing the membrane proton channel, linked together by a central stalk and a peripheral stalk. During catalysis, ATP synthesis in the catalytic domain of F(1) is coupled via a rotary mechanism of the central stalk subunits to proton translocation. Its function is as follows. Key component of the F(0) channel; it plays a direct role in translocation across the membrane. A homomeric c-ring of between 10-14 subunits forms the central stalk rotor element with the F(1) delta and epsilon subunits. The protein is ATP synthase subunit c of Lactobacillus helveticus (strain DPC 4571).